The sequence spans 473 residues: Deoxyribodipyrimidine photo-lyase (473 aa).

The Photolyase/cryptochrome alpha/beta domain maps to 2-134 (PTHLVWFRRD…ICEGFDDSVI (133 aa)). Residues Asn109 and Glu110 each contribute to the (6R)-5,10-methylene-5,6,7,8-tetrahydrofolate site. Residue Tyr224 coordinates FAD. Arg228 contributes to the DNA binding site. 236–240 (TSRLS) is a binding site for FAD. 2 interaction with DNA regions span residues 276–283 (ELIWREFY) and 343–344 (NR). Residue 374–376 (DGD) participates in FAD binding. Gln406 contacts DNA.

This sequence belongs to the DNA photolyase class-1 family. As to quaternary structure, monomer. It depends on FAD as a cofactor. (6R)-5,10-methylene-5,6,7,8-tetrahydrofolate serves as cofactor.

The catalysed reaction is cyclobutadipyrimidine (in DNA) = 2 pyrimidine residues (in DNA).. Functionally, involved in repair of UV radiation-induced DNA damage. Catalyzes the light-dependent monomerization (300-600 nm) of cyclobutyl pyrimidine dimers (in cis-syn configuration), which are formed between adjacent bases on the same DNA strand upon exposure to ultraviolet radiation. The sequence is that of Deoxyribodipyrimidine photo-lyase (phrB) from Salmonella typhimurium (strain LT2 / SGSC1412 / ATCC 700720).